The chain runs to 98 residues: Large ribosomal subunit protein uL23 (98 aa).

This sequence belongs to the universal ribosomal protein uL23 family. As to quaternary structure, part of the 50S ribosomal subunit. Contacts protein L29, and trigger factor when it is bound to the ribosome.

One of the early assembly proteins it binds 23S rRNA. One of the proteins that surrounds the polypeptide exit tunnel on the outside of the ribosome. Forms the main docking site for trigger factor binding to the ribosome. The polypeptide is Large ribosomal subunit protein uL23 (Thioalkalivibrio sulfidiphilus (strain HL-EbGR7)).